A 577-amino-acid polypeptide reads, in one-letter code: Insulin-like growth factor 2 mRNA-binding protein 1 (577 aa).

2 RRM domains span residues 2 to 75 (NKLY…HSVP) and 81 to 156 (RKIQ…YIPD). Phosphoserine occurs at positions 12 and 73. Residues 160-190 (AQGPENGRRGGFGSRGQPRQGSPVAAGAPAK) are disordered. Ser-181 carries the phosphoserine modification. 4 KH domains span residues 195-260 (DIPL…CKMI), 276-343 (EVPL…EQEI), 405-470 (QEMV…QGRI), and 487-553 (KLET…QRKI). The sufficient for nuclear export stretch occupies residues 310-324 (ITISSLQDLTLYNPE). The tract at residues 485 to 495 (EVKLETHIRVP) is sufficient for nuclear export. Thr-528 carries the phosphothreonine modification.

The protein belongs to the RRM IMP/VICKZ family. In terms of assembly, can form homodimers and heterodimers with IGF2BP1 and IGF2BP3. Component of the coding region determinant (CRD)-mediated complex, composed of DHX9, HNRNPU, IGF2BP1, SYNCRIP and YBX1. During HCV infection, identified in a HCV IRES-mediated translation complex, at least composed of EIF3C, IGF2BP1, RPS3 and HCV RNA-replicon. Interacts (via the KH domains) with HIV-1 GAG (via the second zinc finger motif of NC). Associates (via the RRM domains and KH domains) with HIV-1 particles. Identified in a mRNP complex, composed of at least DHX9, DDX3X, ELAVL1, HNRNPU, IGF2BP1, ILF3, PABPC1, PCBP2, PTBP2, STAU1, STAU2, SYNCRIP and YBX1. Identified in a IGF2BP1-dependent mRNP granule complex containing untranslated mRNAs. Interacts with DHX9, ELAVL2, HNRNPA2B1, HNRNPC, HNRNPH1, HNRNPU, IGF2BP2, ILF2, and YBX1. Interacts with FMR1. Component of a multisubunit autoregulatory RNP complex (ARC), at least composed of IGF2BP1, PABPC1 and CSDE1/UNR. Directly interacts with PABPC1. Component of a TAU mRNP complex, at least composed of IGF2BP1, ELAVL4 and G3BP. Interacts with ELAVL4 in an RNA-dependent manner. Associates with microtubules and polysomes. Interacts with AGO1 and AGO2. Interacts with ELAVL1 and MATR3. Interacts (via KH3 and KH4 domains) with SEPIN14P20 peptide RBRP; the interaction results in increased binding of IGF2BP1 to N6-methyladenosine (m6A)-containing mRNAs. Post-translationally, phosphorylated at Ser-181 by mTORC2 cotranslationally, promoting binding to the 3'-UTR of IGF2 mRNA. As to expression, mainly expressed in the embryo, including in fetal liver, fetal lung, fetal kidney, fetal thymus (at protein level). Also expressed follicles of ovary, as well as in gonocytes of testis, spermatogonia, semen, oocytes and placenta (at protein level). Expressed in various cancers, including testis and lung cancers (at protein level), as well as kidney, prostate and trachea cancers.

It localises to the nucleus. The protein resides in the cytoplasm. The protein localises to the perinuclear region. Its subcellular location is the P-body. It is found in the stress granule. It localises to the cell projection. The protein resides in the lamellipodium. The protein localises to the dendrite. Its subcellular location is the dendritic spine. It is found in the growth cone. It localises to the filopodium. The protein resides in the axon. RNA-binding factor that recruits target transcripts to cytoplasmic protein-RNA complexes (mRNPs). This transcript 'caging' into mRNPs allows mRNA transport and transient storage. It also modulates the rate and location at which target transcripts encounter the translational apparatus and shields them from endonuclease attacks or microRNA-mediated degradation. Preferentially binds to N6-methyladenosine (m6A)-containing mRNAs and increases their stability. Plays a direct role in the transport and translation of transcripts required for axonal regeneration in adult sensory neurons. Regulates localized beta-actin/ACTB mRNA translation, a crucial process for cell polarity, cell migration and neurite outgrowth. Co-transcriptionally associates with the ACTB mRNA in the nucleus. This binding involves a conserved 54-nucleotide element in the ACTB mRNA 3'-UTR, known as the 'zipcode'. The RNP thus formed is exported to the cytoplasm, binds to a motor protein and is transported along the cytoskeleton to the cell periphery. During transport, prevents ACTB mRNA from being translated into protein. When the RNP complex reaches its destination near the plasma membrane, IGF2BP1 is phosphorylated. This releases the mRNA, allowing ribosomal 40S and 60S subunits to assemble and initiate ACTB protein synthesis. Monomeric ACTB then assembles into the subcortical actin cytoskeleton. During neuronal development, key regulator of neurite outgrowth, growth cone guidance and neuronal cell migration, presumably through the spatiotemporal fine tuning of protein synthesis, such as that of ACTB. May regulate mRNA transport to activated synapses. Binds to and stabilizes ABCB1/MDR-1 mRNA. During interstinal wound repair, interacts with and stabilizes PTGS2 transcript. PTGS2 mRNA stabilization may be crucial for colonic mucosal wound healing. Binds to the 3'-UTR of IGF2 mRNA by a mechanism of cooperative and sequential dimerization and regulates IGF2 mRNA subcellular localization and translation. Binds to MYC mRNA, in the coding region instability determinant (CRD) of the open reading frame (ORF), hence preventing MYC cleavage by endonucleases and possibly microRNA targeting to MYC-CRD. Binding to MYC mRNA is enhanced by m6A-modification of the CRD. Binds to the 3'-UTR of CD44 mRNA and stabilizes it, hence promotes cell adhesion and invadopodia formation in cancer cells. Binds to the oncofetal H19 transcript and to the neuron-specific TAU mRNA and regulates their localizations. Binds to and stabilizes BTRC/FBW1A mRNA. Binds to the adenine-rich autoregulatory sequence (ARS) located in PABPC1 mRNA and represses its translation. PABPC1 mRNA-binding is stimulated by PABPC1 protein. Prevents BTRC/FBW1A mRNA degradation by disrupting microRNA-dependent interaction with AGO2. Promotes the directed movement of tumor-derived cells by fine-tuning intracellular signaling networks. Binds to MAPK4 3'-UTR and inhibits its translation. Interacts with PTEN transcript open reading frame (ORF) and prevents mRNA decay. This combined action on MAPK4 (down-regulation) and PTEN (up-regulation) antagonizes HSPB1 phosphorylation, consequently it prevents G-actin sequestration by phosphorylated HSPB1, allowing F-actin polymerization. Hence enhances the velocity of cell migration and stimulates directed cell migration by PTEN-modulated polarization. Interacts with Hepatitis C virus (HCV) 5'-UTR and 3'-UTR and specifically enhances translation at the HCV IRES, but not 5'-cap-dependent translation, possibly by recruiting eIF3. Interacts with HIV-1 GAG protein and blocks the formation of infectious HIV-1 particles. Reduces HIV-1 assembly by inhibiting viral RNA packaging, as well as assembly and processing of GAG protein on cellular membranes. During cellular stress, such as oxidative stress or heat shock, stabilizes target mRNAs that are recruited to stress granules, including CD44, IGF2, MAPK4, MYC, PTEN, RAPGEF2 and RPS6KA5 transcripts. This Homo sapiens (Human) protein is Insulin-like growth factor 2 mRNA-binding protein 1 (IGF2BP1).